A 461-amino-acid chain; its full sequence is Lysosomal dipeptide transporter MFSD1 (461 aa).

A compositionally biased stretch (basic and acidic residues) spans 1–13; the sequence is MADREEHQGLLDG. The interval 1–22 is disordered; the sequence is MADREEHQGLLDGDRDEDEGDK. The Dileucine internalization motif motif lies at 10-11; it reads LL. 10 consecutive transmembrane segments (helical) span residues 37-57, 81-101, 111-131, 134-154, 264-284, 302-322, 331-351, 359-379, 390-410, and 416-436; these read LLHR…SYFC, QLYA…GFLL, TVIF…GALA, FWLM…LAVA, LWLI…FIGL, AINS…GFLV, WVML…FTFW, LLGV…AFVV, FMQS…GSIL, and LFLE…VVLL.

Belongs to the major facilitator superfamily. In terms of assembly, homodimer. Interacts with lysosomal protein GLMP (via lumenal domain); the interaction starts while both proteins are still in the endoplasmic reticulum and is required for stabilization of MFSD1 in lysosomes but has no direct effect on its targeting to lysosomes or transporter activity.

The protein localises to the lysosome membrane. The catalysed reaction is L-alpha-aminoacyl-L-arginine(out) = L-alpha-aminoacyl-L-arginine(in). It catalyses the reaction L-arginyl-L-alpha-amino acid(out) = L-arginyl-L-alpha-amino acid(in). The enzyme catalyses L-arginyl-glycine(out) = L-arginyl-glycine(in). It carries out the reaction L-alpha-aminoacyl-L-lysine(out) = L-alpha-aminoacyl-L-lysine(in). The catalysed reaction is L-aspartyl-L-lysine(out) = L-aspartyl-L-lysine(in). It catalyses the reaction L-alanyl-L-lysine(out) = L-alanyl-L-lysine(in). The enzyme catalyses L-lysyl-L-alpha-amino acid(out) = L-lysyl-L-alpha-amino acid(in). It carries out the reaction L-lysyl-L-alanine(out) = L-lysyl-L-alanine(in). The catalysed reaction is L-lysyl-L-lysine(out) = L-lysyl-L-lysine(in). It catalyses the reaction L-lysyl-glycine(out) = L-lysyl-glycine(in). The enzyme catalyses L-alpha-aminoacyl-L-histidine(out) = L-alpha-aminoacyl-L-histidine(in). It carries out the reaction L-histidyl-L-alpha-amino acid(out) = L-histidyl-L-alpha-amino acid(in). The catalysed reaction is L-histidyl-glycine(out) = L-histidyl-glycine(in). Its function is as follows. Lysosomal dipeptide uniporter that selectively exports lysine, arginine or histidine-containing dipeptides with a net positive charge from the lysosome lumen into the cytosol. Could play a role in a specific type of protein O-glycosylation indirectly regulating macrophages migration and tissue invasion. Also essential for liver homeostasis. The polypeptide is Lysosomal dipeptide transporter MFSD1 (mfsd1) (Danio rerio (Zebrafish)).